The primary structure comprises 423 residues: Mannose-6-phosphate isomerase (423 aa).

An N-acetylalanine modification is found at alanine 2. Phosphoserine is present on residues serine 102 and serine 108. Glutamine 110, histidine 112, glutamate 137, and histidine 276 together coordinate Zn(2+). Residue arginine 295 is part of the active site.

It belongs to the mannose-6-phosphate isomerase type 1 family. Requires Zn(2+) as cofactor.

It is found in the cytoplasm. The catalysed reaction is D-mannose 6-phosphate = D-fructose 6-phosphate. The protein operates within nucleotide-sugar biosynthesis; GDP-alpha-D-mannose biosynthesis; alpha-D-mannose 1-phosphate from D-fructose 6-phosphate: step 1/2. Functionally, isomerase that catalyzes the interconversion of fructose-6-P and mannose-6-P and has a critical role in the supply of D-mannose derivatives required for many eukaryotic glycosylation reactions. This chain is Mannose-6-phosphate isomerase (MPI), found in Macaca fascicularis (Crab-eating macaque).